We begin with the raw amino-acid sequence, 333 residues long: Ketol-acid reductoisomerase (NADP(+)) (333 aa).

One can recognise a KARI N-terminal Rossmann domain in the interval 2 to 182 (ANIYYDADCD…GGGRAGILET (181 aa)). NADP(+) contacts are provided by residues 25–28 (YGSQ), lysine 48, serine 51, serine 53, and 83–86 (DTIQ). Histidine 108 is a catalytic residue. Glycine 134 serves as a coordination point for NADP(+). A KARI C-terminal knotted domain is found at 183-331 (SFREETETDL…KKLRSMMKWL (149 aa)). Residues aspartate 191, glutamate 195, glutamate 227, and glutamate 231 each coordinate Mg(2+). Residue serine 252 participates in substrate binding.

This sequence belongs to the ketol-acid reductoisomerase family. Requires Mg(2+) as cofactor.

The enzyme catalyses (2R)-2,3-dihydroxy-3-methylbutanoate + NADP(+) = (2S)-2-acetolactate + NADPH + H(+). The catalysed reaction is (2R,3R)-2,3-dihydroxy-3-methylpentanoate + NADP(+) = (S)-2-ethyl-2-hydroxy-3-oxobutanoate + NADPH + H(+). It participates in amino-acid biosynthesis; L-isoleucine biosynthesis; L-isoleucine from 2-oxobutanoate: step 2/4. The protein operates within amino-acid biosynthesis; L-valine biosynthesis; L-valine from pyruvate: step 2/4. In terms of biological role, involved in the biosynthesis of branched-chain amino acids (BCAA). Catalyzes an alkyl-migration followed by a ketol-acid reduction of (S)-2-acetolactate (S2AL) to yield (R)-2,3-dihydroxy-isovalerate. In the isomerase reaction, S2AL is rearranged via a Mg-dependent methyl migration to produce 3-hydroxy-3-methyl-2-ketobutyrate (HMKB). In the reductase reaction, this 2-ketoacid undergoes a metal-dependent reduction by NADPH to yield (R)-2,3-dihydroxy-isovalerate. This chain is Ketol-acid reductoisomerase (NADP(+)), found in Leptospira borgpetersenii serovar Hardjo-bovis (strain JB197).